The chain runs to 86 residues: MMMIYLSLSLGLLIFSSSNKHLLVTLLSFEFLILLLFSLLVYSNYMSMINAFIFLSVTVCEGALGLSVLVSLVRSSGSDQVQFLNE.

A run of 2 helical transmembrane segments spans residues 22–42 (LLVT…LLVY) and 52–72 (FIFL…LVSL).

This sequence belongs to the complex I subunit 4L family.

Its subcellular location is the mitochondrion membrane. It catalyses the reaction a ubiquinone + NADH + 5 H(+)(in) = a ubiquinol + NAD(+) + 4 H(+)(out). Functionally, core subunit of the mitochondrial membrane respiratory chain NADH dehydrogenase (Complex I) that is believed to belong to the minimal assembly required for catalysis. Complex I functions in the transfer of electrons from NADH to the respiratory chain. The immediate electron acceptor for the enzyme is believed to be ubiquinone. The polypeptide is NADH-ubiquinone oxidoreductase chain 4L (ND4L) (Artemia salina (Brine shrimp)).